Here is a 172-residue protein sequence, read N- to C-terminus: Scytalone dehydratase (172 aa).

Substrate contacts are provided by Y30, Y50, and F53. Catalysis depends on residues H85 and H110. N131 contributes to the substrate binding site.

This sequence belongs to the scytalone dehydratase family. In terms of assembly, homotrimer. Each subunit contains an active site, located in the central part of the hydrophobic core of the monomer, which functions independently.

It is found in the endosome. It catalyses the reaction scytalone = 1,3,8-trihydroxynaphthalene + H2O. It functions in the pathway pigment biosynthesis; melanin biosynthesis. Its activity is regulated as follows. (N-phenoxypropyl)-carboxamides such as carpropamid and derivatives of norephedrine act as inhibitors of scytalone dehydratase activity. Functionally, scytalone dehydratase; part of the gene cluster that mediates the biosynthesis of dihydroxynaphthalene melanin, a bluish-green pigment and a structural component of the conidial wall. Within the pathway, catalyzes the dehydration of scytalone as well as of vermelone. Is also able to dehydrate the alternate substrate 2,3-dihydro-2,5-dihydroxy-4H-benzopyran-4-one (DDBO) to 5-hydroxy-4H-1-benzopyran-4-one (HBO). This Pyricularia oryzae (strain 70-15 / ATCC MYA-4617 / FGSC 8958) (Rice blast fungus) protein is Scytalone dehydratase (SDH1).